The following is a 179-amino-acid chain: O-acetyl-ADP-ribose deacetylase (179 aa).

The region spanning 1-175 (MTSRLQVIQG…LYARLLTQQG (175 aa)) is the Macro domain. Substrate contacts are provided by residues 11 to 12 (DI), N25, 33 to 35 (GVD), and 122 to 126 (STGVY). Residue D35 is the Proton acceptor of the active site.

The protein belongs to the MacroD-type family. YmdB subfamily. Homodimer. Interacts with RNase III.

The catalysed reaction is 3''-O-acetyl-ADP-D-ribose + H2O = ADP-D-ribose + acetate + H(+). The enzyme catalyses 2''-O-acetyl-ADP-D-ribose + H2O = ADP-D-ribose + acetate + H(+). Deacetylates O-acetyl-ADP ribose to yield ADP-ribose and free acetate. Down-regulates ribonuclease 3 (RNase III) activity. Acts by interacting directly with the region of the ribonuclease that is required for dimerization/activation. This chain is O-acetyl-ADP-ribose deacetylase, found in Salmonella newport (strain SL254).